A 173-amino-acid polypeptide reads, in one-letter code: MPGNIVLIGFMGSGKTTVGRLLARDLGWSFLDTDTMVEERLGLPVKEIFAREGEEFFREVEKEAVARVATARQAVIATGGGAVLCGVNVKLLREGNKVVWLQVRPETALKRAGLDDSRPLLQGREPRDIAALLRRREPYYAFADIYIDTDGKEAAAVAREIKEALKAWLESLT.

12–17 (GSGKTT) serves as a coordination point for ATP. Thr-16 is a Mg(2+) binding site. Asp-34, Arg-58, and Gly-80 together coordinate substrate. Position 118 (Arg-118) interacts with ATP. Residue Arg-136 coordinates substrate.

This sequence belongs to the shikimate kinase family. As to quaternary structure, monomer. It depends on Mg(2+) as a cofactor.

It localises to the cytoplasm. It catalyses the reaction shikimate + ATP = 3-phosphoshikimate + ADP + H(+). The protein operates within metabolic intermediate biosynthesis; chorismate biosynthesis; chorismate from D-erythrose 4-phosphate and phosphoenolpyruvate: step 5/7. Functionally, catalyzes the specific phosphorylation of the 3-hydroxyl group of shikimic acid using ATP as a cosubstrate. The sequence is that of Shikimate kinase from Moorella thermoacetica (strain ATCC 39073 / JCM 9320).